The primary structure comprises 485 residues: UDP-glycosyltransferase 91D1 (485 aa).

UDP-alpha-D-glucose-binding positions include serine 296, 355–356 (WA), 373–381 (HCGSGSIVE), and 395–398 (FCDQ).

Belongs to the UDP-glycosyltransferase family.

In terms of biological role, may glycosylate diterpenes or flavonols in leaves. This is UDP-glycosyltransferase 91D1 from Stevia rebaudiana (Stevia).